The chain runs to 353 residues: B1 bradykinin receptor (353 aa).

At 1-41 (MASQTLVVFQASNQSQLPPPNATLCDGAQEAWHLLHKVLPT) the chain is on the extracellular side. N-linked (GlcNAc...) asparagine glycans are attached at residues asparagine 13 and asparagine 21. A helical transmembrane segment spans residues 42 to 62 (CVVAICSGGLLGNLFVLSVFL). Topologically, residues 63–72 (VPRRRLNAAE) are cytoplasmic. The helical transmembrane segment at 73 to 93 (IYLAHLAASDLVFALGLPFWA) threads the bilayer. Residues 94 to 110 (ETIRNGFHWPFGAPLCR) lie on the Extracellular side of the membrane. Cysteine 109 and cysteine 189 are disulfide-bonded. Residues 111–131 (VVNGVIKANLFISIFLVVAIS) traverse the membrane as a helical segment. Residues 132-154 (RDRYRALVHPVASWRRRRRRHWA) are Cytoplasmic-facing. A helical membrane pass occupies residues 155–175 (QATCVLIWTAGGLLSIPTFLL). Residues 176–207 (RSVQVVPELNVSACVLPFPHEAWAFVRTVELN) are Extracellular-facing. An N-linked (GlcNAc...) asparagine glycan is attached at asparagine 185. A helical membrane pass occupies residues 208 to 228 (VLGFLLPLAAILFFNYHILAA). Topologically, residues 229 to 251 (LRGREQLSRTRCGGPRDGKTTAL) are cytoplasmic. Residues 252–272 (ILTLVAVFLLCWTPYHVCAFL) form a helical membrane-spanning segment. Residues 273–295 (EFLLHVRAIRGCFWEDFTDLGLQ) are Extracellular-facing. A helical transmembrane segment spans residues 296-316 (YTNFFAFINSCLNPVIYVFWG). At 317-353 (QLFRTKIWELYHRCLPRKLTAVSSSRRKEIFQIFWRN) the chain is on the cytoplasmic side. Cysteine 330 is lipidated: S-palmitoyl cysteine.

The protein belongs to the G-protein coupled receptor 1 family. Bradykinin receptor subfamily. BDKRB1 sub-subfamily.

The protein resides in the cell membrane. This is a receptor for bradykinin. Could be a factor in chronic pain and inflammation. This chain is B1 bradykinin receptor (BDKRB1), found in Sus scrofa (Pig).